We begin with the raw amino-acid sequence, 349 residues long: Putative phytanoyl-CoA dioxygenase (349 aa).

Residues Lys-118 and 169–171 each bind 2-oxoglutarate; that span reads HLD. Positions 169 and 171 each coordinate Fe cation.

Belongs to the PhyH family. Fe cation serves as cofactor. L-ascorbate is required as a cofactor.

The catalysed reaction is phytanoyl-CoA + 2-oxoglutarate + O2 = 2-hydroxyphytanoyl-CoA + succinate + CO2. It participates in lipid metabolism; fatty acid metabolism. Converts phytanoyl-CoA to 2-hydroxyphytanoyl-CoA. This is Putative phytanoyl-CoA dioxygenase from Dictyostelium discoideum (Social amoeba).